Consider the following 317-residue polypeptide: Taste receptor type 2 member 7 (317 aa).

Residues 1–9 (MTDKVQTTL) are Extracellular-facing. The helical transmembrane segment at 10–30 (LFLAIGEFSVGILGNAFIGLV) threads the bilayer. The Cytoplasmic segment spans residues 31–55 (NCMDWVKKRKIASIDLILTSLAISR). The chain crosses the membrane as a helical span at residues 56–76 (ICLLCVILLDCFMLVLYPDVY). Residues 77-94 (ATGKQMRIIDFFWTLTNH) lie on the Extracellular side of the membrane. The chain crosses the membrane as a helical span at residues 95 to 115 (LSIWFATCLSIYYFFKIANFF). The Cytoplasmic segment spans residues 116–128 (HPLFLWMKWRIDR). A helical membrane pass occupies residues 129–149 (VISWILLGCMVLSVFINLPAT). Residues 150–187 (ENLNADFRRCVKAKRKTNLTWSCRVTKAQHASTKLFLN) lie on the Extracellular side of the membrane. The N-linked (GlcNAc...) asparagine glycan is linked to Asn167. Residues 188–208 (LVTLLPFSVCLVSFFLLILSL) traverse the membrane as a helical segment. The Cytoplasmic segment spans residues 209 to 235 (WRHIRRMQLSATGCRDPSTEAHVRALK). The helical transmembrane segment at 236-256 (AVISFLFLFIAYYLSFLIATS) threads the bilayer. Over 257 to 266 (SYFIPETELA) the chain is Extracellular. The chain crosses the membrane as a helical span at residues 267-287 (VIFGEFIALIYPSSHSFILIL). The Cytoplasmic portion of the chain corresponds to 288-317 (GNNKLRRASLKVLWTVMSILKGRKFQQKQI).

The protein belongs to the G-protein coupled receptor T2R family.

The protein localises to the membrane. Functionally, gustducin-coupled receptor implicated in the perception of bitter compounds in the oral cavity and the gastrointestinal tract. Signals through PLCB2 and the calcium-regulated cation channel TRPM5. The chain is Taste receptor type 2 member 7 (TAS2R7) from Papio hamadryas (Hamadryas baboon).